The sequence spans 84 residues: Small ribosomal subunit protein bS16 (84 aa).

The protein belongs to the bacterial ribosomal protein bS16 family.

The chain is Small ribosomal subunit protein bS16 from Cupriavidus necator (strain ATCC 17699 / DSM 428 / KCTC 22496 / NCIMB 10442 / H16 / Stanier 337) (Ralstonia eutropha).